The sequence spans 379 residues: Cell cycle checkpoint control protein RAD9A (379 aa).

Tyr-17 carries the phosphotyrosine modification. Positions 40 to 80 are possesses 3'-5' exonuclease activity; that stretch reads FLFAPLFFQQYQAATPGQDLLRCKILMKSFLSVFRSLAMLE. The segment at 255 to 379 is sufficient for interaction with ABL1; the sequence is SDTDSHSQDL…VLAEDSEGEG (125 aa). Residues 257-271 show a composition bias toward basic and acidic residues; the sequence is TDSHSQDLGSPERHQ. 2 disordered regions span residues 257–289 and 308–379; these read TDSH…DFAN and SRVL…EGEG. Phosphoserine occurs at positions 261, 266, 317, 330, 363, 368, and 375.

It belongs to the rad9 family. Component of the toroidal 9-1-1 (RAD9-RAD1-HUS1) complex, composed of RAD9A, RAD1 and HUS1. The 9-1-1 complex associates with LIG1, POLB, FEN1, RAD17, HDAC1, RPA1 and RPA2. The 9-1-1 complex associates with the RAD17-RFC complex. RAD9A interacts with BCL2L1, FEN1, RAD9B, ABL1, RPA1, ATAD5 and RPA2. Interacts with DNAJC7. Interacts (when phosphorylated) with TOPBP1. Post-translationally, constitutively phosphorylated on serine and threonine amino acids in absence of DNA damage. Hyperphosphorylated by PRKCD and ABL1 upon DNA damage. Its phosphorylation by PRKCD may be required for the formation of the 9-1-1 complex. Phosphorylated at Ser-330 and Ser-375 by CK2, promoting interaction with TOPBP1.

It is found in the nucleus. It catalyses the reaction Exonucleolytic cleavage in the 3'- to 5'-direction to yield nucleoside 5'-phosphates.. In terms of biological role, component of the 9-1-1 cell-cycle checkpoint response complex that plays a major role in DNA repair. The 9-1-1 complex is recruited to DNA lesion upon damage by the RAD17-replication factor C (RFC) clamp loader complex. Acts then as a sliding clamp platform on DNA for several proteins involved in long-patch base excision repair (LP-BER). The 9-1-1 complex stimulates DNA polymerase beta (POLB) activity by increasing its affinity for the 3'-OH end of the primer-template and stabilizes POLB to those sites where LP-BER proceeds; endonuclease FEN1 cleavage activity on substrates with double, nick, or gap flaps of distinct sequences and lengths; and DNA ligase I (LIG1) on long-patch base excision repair substrates. The 9-1-1 complex is necessary for the recruitment of RHNO1 to sites of double-stranded breaks (DSB) occurring during the S phase. RAD9A possesses 3'-&gt;5' double stranded DNA exonuclease activity. The chain is Cell cycle checkpoint control protein RAD9A (RAD9A) from Macaca fascicularis (Crab-eating macaque).